The chain runs to 479 residues: MSYRVAKASQYLAITGGGITDIKLAKKSWVFPWQSCTVFDVSPVNYTFEVQAMSSEKLPFVIPAVFTIGPRVDDPHALLLYAMLMSQHDKHSNHVNELVQGVIEGETRVLVASMTMEEVFKGTKEFKKEVFDKVQLELNQFGLVIYNANVKQLVDVPGHEYFSYLGQKTQMEAANQAKIDVAEAKMKGEVGAKERTGLTIQNAAKIDAESKIISTQRLGEGTKEEIKVKTEVKVFQNEKEALVAKADAALAIQKAALSQNSRVAEVEAAKAVALREAELQTKVEKMNALTRTEKLKAEFLSKASVEYETKVQEANWELYNKQKQAEAVLYEKQKQAEATKAAADAAFYSKQKDAEGLVAMADAQGTYLKTLLGAVNNDYSAMRDFLMINNGIYQDIAKTNAVAIRDLQPKISVWNHGGAEQGMNGGGKATMNDIAGLYKMLPPVLDTVYEQTGMQPPAWIGTLRGAEPKQSLHAQQHRG.

Cysteine 36 carries the S-palmitoyl cysteine lipid modification. Coiled-coil stretches lie at residues 227-251 (KVKTEVKVFQNEKEALVAKADAALA) and 306-326 (EYETKVQEANWELYNKQKQAE).

The protein belongs to the band 7/mec-2 family. Flotillin subfamily. Post-translationally, may be palmitoylated.

The protein resides in the cell membrane. It localises to the membrane. Its subcellular location is the caveola. In terms of biological role, may act as a scaffolding protein within caveolar membranes, functionally participating in formation of caveolae or caveolae-like vesicles. The protein is Flotillin-like protein 3 (FLOT3) of Arabidopsis thaliana (Mouse-ear cress).